Reading from the N-terminus, the 506-residue chain is Dipeptide and tripeptide permease A (506 aa).

The Cytoplasmic portion of the chain corresponds to 1-36 (MSTANNNSEHPESVSLNAFKQPKAFYLIFSIELWER). Residues 37 to 57 (FGYYGLQGIMAVYLVKMLGLS) traverse the membrane as a helical segment. The Periplasmic portion of the chain corresponds to 58 to 61 (EADS). Residues 62 to 82 (ITLFSSFSALVYGFVAIGGWL) traverse the membrane as a helical segment. Topologically, residues 83–91 (GDKVLGSKR) are cytoplasmic. Transmembrane regions (helical) follow at residues 92 to 112 (VIVLGALVLAVGYAMVAYSGH) and 113 to 133 (EIFWVYLGMATIAVGSGLFKA). Topologically, residues 134 to 155 (NPSSLLSTCYEKDDPRLDGAFT) are cytoplasmic. The chain crosses the membrane as a helical span at residues 156-176 (MYYMSVNIGSFLSMLATPWLA). Over 177-180 (AKYG) the chain is Periplasmic. A helical transmembrane segment spans residues 181–201 (WSVAFSLSVVGMLITLVNFMV). Over 202–222 (CHKWVKQHGSKPDFKPLQVKK) the chain is Cytoplasmic. A helical membrane pass occupies residues 223–243 (LLMVLVGVVALVALSSWLLHN). The Periplasmic portion of the chain corresponds to 244-248 (QIIAR). The chain crosses the membrane as a helical span at residues 249–269 (WALAIVSIGIVIVFAKETFAL). The Cytoplasmic segment spans residues 270–276 (HGAARRK). Residues 277-297 (MIVAFLLMLEAVVFFVLYSQM) traverse the membrane as a helical segment. Residues 298-322 (PTSLNFFAIHNVEHNILGLAFEPEQ) are Periplasmic-facing. A helical transmembrane segment spans residues 323–343 (YQALNPFWIMLASPILAALYN). Residues 344–354 (KMGDRLPMPHK) are Cytoplasmic-facing. A helical membrane pass occupies residues 355–375 (FAFGMILCSGAFLVLPWGASF). Residues 376–385 (ANEQGIVSVN) lie on the Periplasmic side of the membrane. A helical membrane pass occupies residues 386 to 406 (WLILSYALQSIGELMISGLGL). Over 407 to 416 (AMVAQLVPQR) the chain is Cytoplasmic. The chain crosses the membrane as a helical span at residues 417–437 (LMGFIMGSWFLTTAAAALIAG). At 438–461 (KVAGLTAVPGDVNDAHASLAIYSH) the chain is on the periplasmic side. Residues 462-482 (VFMQIGIATAVIAILMMLTAP) form a helical membrane-spanning segment. The Cytoplasmic portion of the chain corresponds to 483 to 506 (KLHRMTLDTAEDTEKKAQAAAITN).

It belongs to the major facilitator superfamily. Proton-dependent oligopeptide transporter (POT/PTR) (TC 2.A.17) family. DtpA subfamily.

The protein localises to the cell inner membrane. Its function is as follows. Proton-dependent permease that transports di- and tripeptides. The sequence is that of Dipeptide and tripeptide permease A from Serratia proteamaculans (strain 568).